Consider the following 352-residue polypeptide: A-type ATP synthase subunit C (352 aa).

This sequence belongs to the V-ATPase V0D/AC39 subunit family. As to quaternary structure, has multiple subunits with at least A(3), B(3), C, D, E, F, H, I and proteolipid K(x).

It is found in the cell membrane. Its function is as follows. Component of the A-type ATP synthase that produces ATP from ADP in the presence of a proton gradient across the membrane. This is A-type ATP synthase subunit C from Halobacterium salinarum (strain ATCC 29341 / DSM 671 / R1).